We begin with the raw amino-acid sequence, 491 residues long: Spermatogenesis-defective protein 39 homolog (491 aa).

Thr-21 carries the phosphothreonine modification. A compositionally biased stretch (polar residues) spans 72–81 (KETAGSSGST). The tract at residues 72–101 (KETAGSSGSTPEGREQLKGRNSFYTQLPKP) is disordered. Phosphothreonine is present on Thr-115. Phosphoserine occurs at positions 119, 122, and 128. Residues 121 to 141 (QSLSDALSDTPAKSYAPELGR) are disordered. Residue Thr-130 is modified to Phosphothreonine.

The protein belongs to the SPE39 family. In terms of assembly, interacts with VPS33B. Associates with the homotypic fusion and vacuole protein sorting (HOPS) complex; impaired by VPS33B. Interacts with RAB11A.

Its subcellular location is the cytoplasm. It localises to the cytoplasmic vesicle. The protein resides in the early endosome. The protein localises to the recycling endosome. It is found in the late endosome. Functionally, proposed to be involved in endosomal maturation implicating in part VPS33B. In epithelial cells, the VPS33B:VIPAS39 complex may play a role in the apical RAB11A-dependent recycling pathway and in the maintenance of the apical-basolateral polarity. May play a role in lysosomal trafficking, probably via association with the core HOPS complex in a discrete population of endosomes; the functions seems to be independent of VPS33B. May play a role in vesicular trafficking during spermatogenesis. May be involved in direct or indirect transcriptional regulation of E-cadherin. The protein is Spermatogenesis-defective protein 39 homolog (Vipas39) of Mus musculus (Mouse).